The sequence spans 140 residues: Resuscitation-promoting factor RpfC (140 aa).

The first 31 residues, Met1–Ala31, serve as a signal peptide directing secretion.

Belongs to the transglycosylase family. Rpf subfamily.

It localises to the secreted. Its function is as follows. Factor that stimulates resuscitation of dormant cells. Has peptidoglycan (PG) hydrolytic activity. In Mycobacterium tuberculosis (strain ATCC 35801 / TMC 107 / Erdman), this protein is Resuscitation-promoting factor RpfC (rpfC).